The chain runs to 94 residues: 2S albumin-like cysteine protease inhibitor (94 aa).

Cystine bridges form between cysteine 12–cysteine 35, cysteine 36–cysteine 82, and cysteine 48–cysteine 89.

This sequence belongs to the 2S seed storage albumins family. Expressed in seeds (at protein level).

In terms of biological role, cysteine protease inhibitor that likely functions in defense against insects by inhibiting cysteine proteases in the midgut of herbivore insects such as C.maculatus. Selectively inhibits cathepsin L, as well as papain, ficin and bromelain with lower efficiency. Shows antitumor activity, inhibiting the growth of prostate cancer cell lines PC3 and DU145, and the gastric cancer cell line Hs746T. No activity against cathepsin B or serine proteases (trypsin, human plasma kallikrein and elastase). The sequence is that of 2S albumin-like cysteine protease inhibitor from Araucaria angustifolia (Brazilian pine tree).